Here is a 406-residue protein sequence, read N- to C-terminus: 4-hydroxy-3-methylbut-2-en-1-yl diphosphate synthase (flavodoxin) (406 aa).

[4Fe-4S] cluster contacts are provided by Cys297, Cys300, Cys343, and Glu350.

It belongs to the IspG family. As to quaternary structure, homodimer. [4Fe-4S] cluster serves as cofactor.

The catalysed reaction is (2E)-4-hydroxy-3-methylbut-2-enyl diphosphate + oxidized [flavodoxin] + H2O + 2 H(+) = 2-C-methyl-D-erythritol 2,4-cyclic diphosphate + reduced [flavodoxin]. The protein operates within isoprenoid biosynthesis; isopentenyl diphosphate biosynthesis via DXP pathway; isopentenyl diphosphate from 1-deoxy-D-xylulose 5-phosphate: step 5/6. Its function is as follows. Converts 2C-methyl-D-erythritol 2,4-cyclodiphosphate (ME-2,4cPP) into 1-hydroxy-2-methyl-2-(E)-butenyl 4-diphosphate. This chain is 4-hydroxy-3-methylbut-2-en-1-yl diphosphate synthase (flavodoxin), found in Thermus thermophilus (strain ATCC BAA-163 / DSM 7039 / HB27).